The following is a 224-amino-acid chain: Zinc finger protein 22 (224 aa).

Positions 1–34 (MRLAKPKAGISRSSSQGKAYENKRKTGRQRQKWG) are disordered. N6-acetyllysine occurs at positions 18 and 23. Serine 49 is subject to Phosphoserine. 5 C2H2-type zinc fingers span residues 55 to 77 (YKCT…QKIH), 83 to 105 (HKCA…RRIH), 111 to 133 (YKCD…QRIH), 139 to 161 (YQCD…QRTH), and 167 to 189 (YQCS…MKVH).

The protein belongs to the krueppel C2H2-type zinc-finger protein family. In terms of tissue distribution, in the embryo, expressed in developing craniofacial structures including dental epithelium of maxillary molar tooth organs, tongue epithelium and muscle, and craniofacial bone osteoblasts. In the adult, expressed in mesoderm-derived tissues such as skeletal muscle, heart, kidney and liver. Intermediate expression in spleen, thymus and brain. Low levels in endoderm-derived tissues such as intestine and colon.

It is found in the nucleus. Its function is as follows. Binds DNA through the consensus sequence 5'-CAATG-3'. May be involved in transcriptional regulation and may play a role in tooth formation. The chain is Zinc finger protein 22 (ZNF22) from Homo sapiens (Human).